Consider the following 70-residue polypeptide: DNA gyrase inhibitor YacG (70 aa).

4 residues coordinate Zn(2+): Cys9, Cys12, Cys28, and Cys32. The disordered stretch occupies residues 43 to 70; sequence ESRKIPGSSIDPESIVTTNNKQDNVDEQ.

The protein belongs to the DNA gyrase inhibitor YacG family. In terms of assembly, interacts with GyrB. Zn(2+) is required as a cofactor.

Functionally, inhibits all the catalytic activities of DNA gyrase by preventing its interaction with DNA. Acts by binding directly to the C-terminal domain of GyrB, which probably disrupts DNA binding by the gyrase. The protein is DNA gyrase inhibitor YacG of Legionella pneumophila (strain Corby).